A 649-amino-acid chain; its full sequence is ATP-dependent zinc metalloprotease FtsH (649 aa).

At 1 to 18 (MQCSYPLARQLERSSALN) the chain is on the cytoplasmic side. Residues 19–39 (NNLFQKAAIWLVIALVLFTVF) form a helical membrane-spanning segment. Residues 40 to 115 (KQFDKPRAQD…VTGKADDEPN (76 aa)) lie on the Periplasmic side of the membrane. The helical transmembrane segment at 116 to 136 (VLVQALYYLGPTLLIIVFWFY) threads the bilayer. Residues 137 to 649 (MMRQMQGGGK…PATARADETV (513 aa)) lie on the Cytoplasmic side of the membrane. Residue 210 to 217 (GPPGTGKT) participates in ATP binding. A Zn(2+)-binding site is contributed by His-432. Residue Glu-433 is part of the active site. 2 residues coordinate Zn(2+): His-436 and Asp-508. The disordered stretch occupies residues 606 to 649 (IMAGRPPRPPRGAQGPNSGGNTPPGGSPVAPTNAPATARADETV). The span at 616 to 626 (RGAQGPNSGGN) shows a compositional bias: low complexity.

In the central section; belongs to the AAA ATPase family. This sequence in the C-terminal section; belongs to the peptidase M41 family. As to quaternary structure, homohexamer. The cofactor is Zn(2+).

Its subcellular location is the cell inner membrane. In terms of biological role, acts as a processive, ATP-dependent zinc metallopeptidase for both cytoplasmic and membrane proteins. Plays a role in the quality control of integral membrane proteins. In Cupriavidus metallidurans (strain ATCC 43123 / DSM 2839 / NBRC 102507 / CH34) (Ralstonia metallidurans), this protein is ATP-dependent zinc metalloprotease FtsH.